The primary structure comprises 448 residues: Tubby-like F-box protein 3 (448 aa).

The F-box domain occupies 56-102; sequence ESRWASLPPELLREVIRRLEADESTWPSRRNVVCFAAVCRTWREMCK. The segment covering 387–403 has biased composition (pro residues); that stretch reads PSPPPAGAPTPSQPGPA. The tract at residues 387–406 is disordered; the sequence is PSPPPAGAPTPSQPGPADPE.

The protein belongs to the TUB family. In terms of tissue distribution, expressed in roots, leaves, flowers and seeds.

This is Tubby-like F-box protein 3 (TULP3) from Oryza sativa subsp. japonica (Rice).